Reading from the N-terminus, the 501-residue chain is Lysine--tRNA ligase (501 aa).

The Mg(2+) site is built by Glu-402 and Glu-409.

This sequence belongs to the class-II aminoacyl-tRNA synthetase family. As to quaternary structure, homodimer. Mg(2+) serves as cofactor.

The protein resides in the cytoplasm. The enzyme catalyses tRNA(Lys) + L-lysine + ATP = L-lysyl-tRNA(Lys) + AMP + diphosphate. The protein is Lysine--tRNA ligase of Helicobacter pylori (strain G27).